We begin with the raw amino-acid sequence, 429 residues long: Enolase (429 aa).

Q162 serves as a coordination point for (2R)-2-phosphoglycerate. The active-site Proton donor is the E204. The Mg(2+) site is built by D241, E283, and D310. 4 residues coordinate (2R)-2-phosphoglycerate: K335, R364, S365, and K386. Residue K335 is the Proton acceptor of the active site.

Belongs to the enolase family. Mg(2+) serves as cofactor.

It is found in the cytoplasm. It localises to the secreted. The protein resides in the cell surface. The catalysed reaction is (2R)-2-phosphoglycerate = phosphoenolpyruvate + H2O. Its pathway is carbohydrate degradation; glycolysis; pyruvate from D-glyceraldehyde 3-phosphate: step 4/5. Its function is as follows. Catalyzes the reversible conversion of 2-phosphoglycerate (2-PG) into phosphoenolpyruvate (PEP). It is essential for the degradation of carbohydrates via glycolysis. The polypeptide is Enolase (Mycobacterium avium (strain 104)).